The primary structure comprises 128 residues: MKKFLEKKLKKIAYERIDILMSLAEEEAKKGNWDRAKRYVYLARRIAMKMRIRFPKKWKRRICKKCGTFLLYGRNARVRIKSKRYPHVVITCLECGAIYRIPMIREKKEKRRKKLEERLKAKSNSQTS.

Positions 63, 66, 92, and 95 each coordinate Zn(2+).

This sequence belongs to the eukaryotic/archaeal RNase P protein component 4 family. In terms of assembly, consists of a catalytic RNA component and at least 4 protein subunits. Forms a subcomplex with Rnp1 which stimulates the catalytic RNA. It depends on Zn(2+) as a cofactor.

Its subcellular location is the cytoplasm. It catalyses the reaction Endonucleolytic cleavage of RNA, removing 5'-extranucleotides from tRNA precursor.. In terms of biological role, part of ribonuclease P, a protein complex that generates mature tRNA molecules by cleaving their 5'-ends. This Methanocaldococcus jannaschii (strain ATCC 43067 / DSM 2661 / JAL-1 / JCM 10045 / NBRC 100440) (Methanococcus jannaschii) protein is Ribonuclease P protein component 4.